A 247-amino-acid chain; its full sequence is ATP synthase subunit C lysine N-methyltransferase (247 aa).

The residue at position 1 (Met-1) is an N-acetylmethionine. Basic and acidic residues predominate over residues 1–12 (MERVGTPEEERQ). Positions 1–25 (MERVGTPEEERQAGPVLPTSLESDS) are disordered. The chain crosses the membrane as a helical span at residues 34–54 (LITGVVGGALLTVYAVATPFI). The segment at 51–85 (TPFITPALRKVCLPFVPATSKQVENVVRMLRHRRG) is required for mitochondrial location. The interval 209 to 247 (QRGRGGRPNQEWVGQKNLSETAGLQASSSETRSKLLDVE) is disordered. The span at 224–238 (KNLSETAGLQASSSE) shows a compositional bias: polar residues.

This sequence belongs to the ANT/ATPSC lysine N-methyltransferase family. In terms of tissue distribution, ubiquitously expressed.

The protein resides in the mitochondrion membrane. It catalyses the reaction L-lysyl-[protein] + 3 S-adenosyl-L-methionine = N(6),N(6),N(6)-trimethyl-L-lysyl-[protein] + 3 S-adenosyl-L-homocysteine + 3 H(+). Mitochondrial protein-lysine N-methyltransferase that trimethylates ATP synthase subunit C, ATP5MC1 and ATP5MC2. Trimethylation is required for proper incorporation of the C subunit into the ATP synthase complex and mitochondrial respiration. Promotes chronic pain. Involved in persistent inflammatory and neuropathic pain: methyltransferase activity in the mitochondria of sensory neurons promotes chronic pain via a pathway that depends on the production of reactive oxygen species (ROS) and on the engagement of spinal cord microglia. In Mus musculus (Mouse), this protein is ATP synthase subunit C lysine N-methyltransferase.